An 869-amino-acid polypeptide reads, in one-letter code: MVSAIFRKIFGTKNDREIKKYVKRVKFINTLEPKYEAMNDEELKAAFNELRAKVKEGVLGLEEVLNDVFAVVREASKRVLKMRHFDVQLIGGMVLHEGRIAEMKTGEGKTLVATLPVVLNAMSGKGVHVVTVNDYLAKRDATQMGELYNFLGLSVDVVLSGVYDDSVRQAAYNADITYGTNSEFGFDYLRDNMKFDAKDKVQREHNFVIVDEVDSILIDEARTPLIISGPTNRTLDGYIKADEVAQKLTRGEAADPNVPNSKATGDFVVDEKNRTIMITEAGISKAEKLFGVENLYNLENAILSHHLDQALKAHNLFERDVHYVVKNNEVVIVDEFTGRLSEGRRFSEGLHQALEAKEKVKIQEESQTLADTTYQNYFRMYKKLAGMTGTAQTEATEFSQIYKLDVISIPTNVPVMRIDKNDLIYKTQAEKFKAVIDEIKRSHEKGQPVLVGTASIERSEVLHEMLVKAKIPHSVLNAKNHEKEAQIIADAGAKGAVTIATNMAGRGVDIRIDDEVRALGGLYIIGTERHESRRIDNQLRGRAGRQGDPGMSRFYLSLEDNLLRIFGSDRIKAIMDRLGIDEGESIESRMVTRAVENAQKKVESLHFEARKHLLEYDDVANEQRKTIYKYRDELLDKEYDMSEKIAQNRGEYVALLLDQAEIFHGGLKDDYDIKNLCALIFNDCGEEINESELKGLEYDEILAKLTEILAKRYDEKMSVLEPTQKRDIEKVLYLQVLDNAWREHLYQMDILKTGIGLRGYNQKDPLIEYKKESYNLFVELVSRLKSESVKMLQMVRLRSREEQERETAAMLERMQEQQDEGLKFNQREGEDAPAVREKKIPRNSPCPCGSGKKYKDCCGKSGPKKGILA.

Residues glutamine 88, 106–110, and aspartate 509 contribute to the ATP site; that span reads GEGKT. Basic and acidic residues predominate over residues 818 to 840; sequence QDEGLKFNQREGEDAPAVREKKI. The disordered stretch occupies residues 818–869; it reads QDEGLKFNQREGEDAPAVREKKIPRNSPCPCGSGKKYKDCCGKSGPKKGILA. Zn(2+) is bound by residues cysteine 846, cysteine 848, cysteine 857, and cysteine 858.

It belongs to the SecA family. In terms of assembly, monomer and homodimer. Part of the essential Sec protein translocation apparatus which comprises SecA, SecYEG and auxiliary proteins SecDF-YajC and YidC. Zn(2+) is required as a cofactor.

It is found in the cell inner membrane. Its subcellular location is the cytoplasm. It carries out the reaction ATP + H2O + cellular proteinSide 1 = ADP + phosphate + cellular proteinSide 2.. Functionally, part of the Sec protein translocase complex. Interacts with the SecYEG preprotein conducting channel. Has a central role in coupling the hydrolysis of ATP to the transfer of proteins into and across the cell membrane, serving as an ATP-driven molecular motor driving the stepwise translocation of polypeptide chains across the membrane. In Campylobacter curvus (strain 525.92), this protein is Protein translocase subunit SecA.